The sequence spans 329 residues: MPITRMRMRPWLEMQINSNQIPGLIWINKEEMIFQIPWKHAAKHGWDINKDACLFRSWAIHTGRYKAGEKEPDPKTWKANFRCAMNSLPDIEEVKDQSRNKGSSAVRVYRMLPPLTRNQRKERKSKSSRDTKSKTKRKLCGDVSPDTFSDGLSSSTLPDDHSSYTTQGYLGQDLDMERDITPALSPCVVSSSLSEWHMQMDIIPDSTTDLYNLQVSPMPSTSEAATDEDEEGKIAEDLMKLFEQSEWQPTHIDGKGYLLNEPGTQLSSVYGDFSCKEEPEIDSPRGDIGIGIQHVFTEMKNMDSIMWMDSLLGNSVRLPPSIQAIPCAP.

Positions 5-113 (RMRMRPWLEM…SAVRVYRMLP (109 aa)) form a DNA-binding region, IRF tryptophan pentad repeat. K78 carries the post-translational modification N6-acetyllysine. Positions 93–166 (EVKDQSRNKG…LPDDHSSYTT (74 aa)) are disordered. Over residues 146 to 166 (DTFSDGLSSSTLPDDHSSYTT) the composition is skewed to polar residues. Glycyl lysine isopeptide (Lys-Gly) (interchain with G-Cter in SUMO) cross-links involve residues K276 and K300.

This sequence belongs to the IRF family. In terms of assembly, monomer. Homodimer. Interacts with EP300. Interacts with MYD88. Interacts with PIAS3. Interacts with SPOP. Post-translationally, phosphorylated by CK2 and this positively regulates its activity. Ubiquitinated in a SPOP-depedent manner. Sumoylation represses the transcriptional activity and displays enhanced resistance to protein degradation. Sumoylated by UBE2I/UBC9 and SUMO1. Inactivates the tumor suppressor activity. Elevated levels in tumor cells. Major site is Lys-276. Sumoylation is enhanced by PIAS3. Desumoylated by SENP1 in tumor cells and appears to compete with ubiquitination on C-terminal sites. In terms of processing, ubiquitinated. Appears to compete with sumoylation on C-terminal sites.

The protein localises to the nucleus. The protein resides in the cytoplasm. With respect to regulation, activated by MYD88. In terms of biological role, transcriptional regulator which displays a remarkable functional diversity in the regulation of cellular responses. Regulates transcription of IFN and IFN-inducible genes, host response to viral and bacterial infections, regulation of many genes expressed during hematopoiesis, inflammation, immune responses and cell proliferation and differentiation, regulation of the cell cycle and induction of growth arrest and programmed cell death following DNA damage. Stimulates both innate and acquired immune responses through the activation of specific target genes and can act as a transcriptional activator and repressor regulating target genes by binding to an interferon-stimulated response element (ISRE) in their promoters. Has an essentail role in IFNG-dependent immunity to mycobacteria. Binds to a consensus sequence in gene promoters. Its target genes for transcriptional activation activity are: genes involved in anti-viral response, such as IFN-alpha/beta, RIGI, TNFSF10/TRAIL, ZBP1, OAS1/2, PIAS1/GBP, EIF2AK2/PKR and RSAD2/viperin; antibacterial response, such as GBP2, GBP5, IRGB10 and NOS2/INOS; anti-proliferative response, such as p53/TP53, LOX and CDKN1A; apoptosis, such as BBC3/PUMA, CASP1, CASP7 and CASP8; immune response, such as IL7, IL12A/B and IL15, PTGS2/COX2 and CYBB; DNA damage responses and DNA repair, such as POLQ/POLH; MHC class I expression, such as TAP1, PSMB9/LMP2, PSME1/PA28A, PSME2/PA28B and B2M and MHC class II expression, such as CIITA; metabolic enzymes, such as ACOD1/IRG1. Represses genes involved in anti-proliferative response, such as BIRC5/survivin, CCNB1, CCNE1, CDK1, CDK2 and CDK4 and in immune response, such as FOXP3, IL4, ANXA2 and TLR4. Stimulates p53/TP53-dependent transcription through enhanced recruitment of EP300 leading to increased acetylation of p53/TP53. Plays an important role in immune response directly affecting NK maturation and activity, macrophage production of IL12, Th1 development and maturation of CD8+ T-cells. Also implicated in the differentiation and maturation of dendritic cells and in the suppression of regulatory T (Treg) cells development. Acts as a tumor suppressor and plays a role not only in antagonism of tumor cell growth but also in stimulating an immune response against tumor cells. The chain is Interferon regulatory factor 1 (Irf1) from Mus musculus (Mouse).